We begin with the raw amino-acid sequence, 187 residues long: Superoxide dismutase [Cu-Zn] (187 aa).

Residues 1–23 form the signal peptide; sequence MMKMKTLLALAISGICAAGVANA. Cu cation is bound by residues His-80, His-82, and His-105. A disulfide bridge links Cys-87 with Cys-183. His-105, His-114, His-123, and Asp-126 together coordinate Zn(2+). His-161 is a binding site for Cu cation.

The protein belongs to the Cu-Zn superoxide dismutase family. As to quaternary structure, homodimer. Cu cation is required as a cofactor. The cofactor is Zn(2+).

It is found in the periplasm. The enzyme catalyses 2 superoxide + 2 H(+) = H2O2 + O2. Functionally, destroys radicals which are normally produced within the cells and which are toxic to biological systems. In terms of biological role, may confer survival advantage by accelerating dismutation of superoxide of environmental origin to hydrogen peroxide, disruptive to the normal mucociliary clearance process in the host. The protein is Superoxide dismutase [Cu-Zn] (sodC) of Haemophilus parainfluenzae.